Consider the following 228-residue polypeptide: Tumor necrosis factor receptor superfamily member 18 (228 aa).

The first 19 residues, Met1–Gly19, serve as a signal peptide directing secretion. At Gln20–His153 the chain is on the extracellular side. TNFR-Cys repeat units lie at residues Gly28–Ile61, Cys62–Val101, and Ala102–Ile142. 5 cysteine pairs are disulfide-bonded: Cys29–Cys44, Cys62–Cys74, Cys69–Cys82, Cys103–Cys122, and Cys116–Cys141. N-linked (GlcNAc...) asparagine glycosylation is found at Asn36 and Asn40. 2 N-linked (GlcNAc...) asparagine glycosylation sites follow: Asn121 and Asn134. Residues Leu154–Gly174 form a helical membrane-spanning segment. Topologically, residues Leu175–Pro228 are cytoplasmic.

In terms of assembly, binds to TRAF1, TRAF2, and TRAF3, but not TRAF5 and TRAF6. Binds through its C-terminus to SIVA1/SIVA. As to expression, preferentially expressed in activated T lymphocytes.

It localises to the cell membrane. It is found in the secreted. Its function is as follows. Receptor for TNFSF18. Seems to be involved in interactions between activated T-lymphocytes and endothelial cells and in the regulation of T-cell receptor-mediated cell death. Mediated NF-kappa-B activation via the TRAF2/NIK pathway. The protein is Tumor necrosis factor receptor superfamily member 18 (Tnfrsf18) of Mus musculus (Mouse).